We begin with the raw amino-acid sequence, 164 residues long: Transcriptional repressor NrdR (164 aa).

Residues 3–34 (CPKCNYNKSSVVDSRQAEDGNTIRRRRECEKC) fold into a zinc finger. An ATP-cone domain is found at 49-139 (LLVVKKDGTR…VYKSFKDVDE (91 aa)).

This sequence belongs to the NrdR family. Requires Zn(2+) as cofactor.

Its function is as follows. Negatively regulates transcription of bacterial ribonucleotide reductase nrd genes and operons by binding to NrdR-boxes. In Streptococcus uberis (strain ATCC BAA-854 / 0140J), this protein is Transcriptional repressor NrdR.